The primary structure comprises 307 residues: Pantothenate kinase (307 aa).

87–94 provides a ligand contact to ATP; that stretch reads GSVAVGKS.

The protein belongs to the prokaryotic pantothenate kinase family.

It localises to the cytoplasm. It carries out the reaction (R)-pantothenate + ATP = (R)-4'-phosphopantothenate + ADP + H(+). It functions in the pathway cofactor biosynthesis; coenzyme A biosynthesis; CoA from (R)-pantothenate: step 1/5. The chain is Pantothenate kinase from Vibrio vulnificus (strain YJ016).